The sequence spans 268 residues: Urease accessory protein UreD (268 aa).

It belongs to the UreD family. In terms of assembly, ureD, UreF and UreG form a complex that acts as a GTP-hydrolysis-dependent molecular chaperone, activating the urease apoprotein by helping to assemble the nickel containing metallocenter of UreC. The UreE protein probably delivers the nickel.

The protein localises to the cytoplasm. Functionally, required for maturation of urease via the functional incorporation of the urease nickel metallocenter. This is Urease accessory protein UreD from Lysinibacillus sphaericus (strain C3-41).